The sequence spans 401 residues: Argininosuccinate synthase (401 aa).

ATP is bound at residue 8–16 (AYSGGLDTS). Residue Y85 coordinates L-citrulline. An ATP-binding site is contributed by G115. 3 residues coordinate L-aspartate: T117, N121, and D122. L-citrulline is bound at residue N121. R125, S173, E258, and Y270 together coordinate L-citrulline.

The protein belongs to the argininosuccinate synthase family. Type 1 subfamily. In terms of assembly, homotetramer.

The protein resides in the cytoplasm. The catalysed reaction is L-citrulline + L-aspartate + ATP = 2-(N(omega)-L-arginino)succinate + AMP + diphosphate + H(+). The protein operates within amino-acid biosynthesis; L-arginine biosynthesis; L-arginine from L-ornithine and carbamoyl phosphate: step 2/3. This chain is Argininosuccinate synthase, found in Staphylococcus aureus (strain MSSA476).